The sequence spans 351 residues: Quinolinate phosphoribosyltransferase [decarboxylating] 2, mitochondrial (351 aa).

Residues Arg142, 173 to 175 (TRK), Arg197, Lys207, Glu240, Asp267, 299 to 301 (SGN), and 320 to 322 (SGA) contribute to the substrate site.

The protein belongs to the NadC/ModD family.

Its subcellular location is the mitochondrion. It carries out the reaction nicotinate beta-D-ribonucleotide + CO2 + diphosphate = quinolinate + 5-phospho-alpha-D-ribose 1-diphosphate + 2 H(+). Its pathway is alkaloid biosynthesis; nicotine biosynthesis. It functions in the pathway cofactor biosynthesis; NAD(+) biosynthesis; nicotinate D-ribonucleotide from quinolinate: step 1/1. Involved in the biosynthesis of pyridine alkaloid natural products, leading mainly to the production of anabasine, anatabine, nicotine and nornicotine, effective deterrents against herbivores with antiparasitic and pesticide properties (neurotoxins); nornicotine serves as the precursor in the synthesis of the carcinogen compound N'-nitrosonornicotine (NNN). Involved in the catabolism of quinolinic acid (QA). The protein is Quinolinate phosphoribosyltransferase [decarboxylating] 2, mitochondrial of Nicotiana glauca (Glaucous tobacco).